The primary structure comprises 134 residues: Peptide methionine sulfoxide reductase MsrB (134 aa).

The MsrB domain maps to 9-131 (DEYWRDKLDA…NSASIQLQKE (123 aa)). Positions 48, 51, 97, and 100 each coordinate Zn(2+). Cysteine 120 functions as the Nucleophile in the catalytic mechanism.

This sequence belongs to the MsrB Met sulfoxide reductase family. Requires Zn(2+) as cofactor.

The enzyme catalyses L-methionyl-[protein] + [thioredoxin]-disulfide + H2O = L-methionyl-(R)-S-oxide-[protein] + [thioredoxin]-dithiol. In Saccharophagus degradans (strain 2-40 / ATCC 43961 / DSM 17024), this protein is Peptide methionine sulfoxide reductase MsrB.